A 254-amino-acid chain; its full sequence is Small ribosomal subunit protein eS1 (254 aa).

An N-acetylalanine; partial modification is found at A2.

Belongs to the eukaryotic ribosomal protein eS1 family. As to quaternary structure, component of the small ribosomal subunit. Mature ribosomes consist of a small (40S) and a large (60S) subunit. The 40S subunit contains about 33 different proteins and 1 molecule of RNA (18S). The 60S subunit contains about 49 different proteins and 3 molecules of RNA (25S, 5.8S and 5S).

It localises to the cytoplasm. The protein is Small ribosomal subunit protein eS1 of Zygosaccharomyces rouxii (strain ATCC 2623 / CBS 732 / NBRC 1130 / NCYC 568 / NRRL Y-229).